The primary structure comprises 170 residues: Putative pre-16S rRNA nuclease (170 aa).

The protein belongs to the YqgF nuclease family.

It is found in the cytoplasm. Functionally, could be a nuclease involved in processing of the 5'-end of pre-16S rRNA. In Synechococcus sp. (strain JA-2-3B'a(2-13)) (Cyanobacteria bacterium Yellowstone B-Prime), this protein is Putative pre-16S rRNA nuclease.